The sequence spans 307 residues: Replication termination factor 2 (307 aa).

A disordered region spans residues 193–296 (AKLEKKTKKP…SSAKRSKEES (104 aa)). Residues 227-241 (GKPEEADPDPREKKS) show a composition bias toward basic and acidic residues. Ser288 is subject to Phosphoserine.

Belongs to the rtf2 family. Interacts with DDI2; probably also interacts with DDI1. In terms of processing, undergoes proteasomal degradation, via DDI1 and DDI2. Removal from stalled replisomes and degradation are required for genome stability.

The protein localises to the chromosome. Its function is as follows. Replication termination factor which is a component of the elongating replisome. Required for ATR pathway signaling upon DNA damage and has a positive activity during DNA replication. Might function to facilitate fork pausing at replication fork barriers like the rDNA. May be globally required to stimulate ATR signaling after the fork stalls or encounters a lesion. Interacts with nascent DNA. In Mus musculus (Mouse), this protein is Replication termination factor 2.